We begin with the raw amino-acid sequence, 118 residues long: Small ribosomal subunit protein mS37 (118 aa).

Residues 42–84 (EATCITEMSMMMACWKQNEFRDEACRKEIQDFFDCSSRAQEAR) form the CHCH domain. 2 consecutive short sequence motifs (cx9C motif) follow at residues 45–55 (CITEMSMMMAC) and 66–76 (CRKEIQDFFDC). Intrachain disulfides connect cysteine 45–cysteine 76 and cysteine 55–cysteine 66. The interval 86–105 (MRSIQESLGQSESLSPHKMT) is disordered. The span at 89-99 (IQESLGQSESL) shows a compositional bias: polar residues.

The protein belongs to the mitochondrion-specific ribosomal protein mS37 family. As to quaternary structure, component of the mitochondrial ribosome small subunit (28S) which comprises a 12S rRNA and about 30 distinct proteins.

It localises to the mitochondrion. Its subcellular location is the nucleus. This chain is Small ribosomal subunit protein mS37 (Chchd1), found in Mus musculus (Mouse).